The following is a 59-amino-acid chain: Conotoxin Bu1.2 (59 aa).

An N-terminal signal peptide occupies residues 1–16 (MFTVFLLVVLATTVVS). Residues 17 to 42 (FSTDDESDGSNEEPSADQAARSAMNR) constitute a propeptide that is removed on maturation. Residues 18–43 (STDDESDGSNEEPSADQAARSAMNRP) form a disordered region. A compositionally biased stretch (acidic residues) spans 19–31 (TDDESDGSNEEPS). 2 cysteine pairs are disulfide-bonded: C46-C52 and C47-C57. G58 is subject to Glycine amide.

The protein belongs to the conotoxin A superfamily. In terms of tissue distribution, expressed by the venom duct.

Its subcellular location is the secreted. In Conus bullatus (Bubble cone), this protein is Conotoxin Bu1.2.